The sequence spans 336 residues: Holliday junction branch migration complex subunit RuvB (336 aa).

The interval 4 to 185 (ADRLISADIQ…FGIVQRLEFY (182 aa)) is large ATPase domain (RuvB-L). ATP-binding positions include isoleucine 24, arginine 25, glycine 66, lysine 69, threonine 70, threonine 71, 132 to 134 (EDY), arginine 175, tyrosine 185, and arginine 222. Position 70 (threonine 70) interacts with Mg(2+). The interval 186-256 (NVDDLQHIVA…IASKALDMLN (71 aa)) is small ATPAse domain (RuvB-S). Residues 259-336 (AAGFDYLDRK…RHFNRIMEAP (78 aa)) are head domain (RuvB-H). DNA is bound by residues arginine 295, arginine 314, and arginine 319.

This sequence belongs to the RuvB family. As to quaternary structure, homohexamer. Forms an RuvA(8)-RuvB(12)-Holliday junction (HJ) complex. HJ DNA is sandwiched between 2 RuvA tetramers; dsDNA enters through RuvA and exits via RuvB. An RuvB hexamer assembles on each DNA strand where it exits the tetramer. Each RuvB hexamer is contacted by two RuvA subunits (via domain III) on 2 adjacent RuvB subunits; this complex drives branch migration. In the full resolvosome a probable DNA-RuvA(4)-RuvB(12)-RuvC(2) complex forms which resolves the HJ.

The protein localises to the cytoplasm. The catalysed reaction is ATP + H2O = ADP + phosphate + H(+). Its function is as follows. The RuvA-RuvB-RuvC complex processes Holliday junction (HJ) DNA during genetic recombination and DNA repair, while the RuvA-RuvB complex plays an important role in the rescue of blocked DNA replication forks via replication fork reversal (RFR). RuvA specifically binds to HJ cruciform DNA, conferring on it an open structure. The RuvB hexamer acts as an ATP-dependent pump, pulling dsDNA into and through the RuvAB complex. RuvB forms 2 homohexamers on either side of HJ DNA bound by 1 or 2 RuvA tetramers; 4 subunits per hexamer contact DNA at a time. Coordinated motions by a converter formed by DNA-disengaged RuvB subunits stimulates ATP hydrolysis and nucleotide exchange. Immobilization of the converter enables RuvB to convert the ATP-contained energy into a lever motion, pulling 2 nucleotides of DNA out of the RuvA tetramer per ATP hydrolyzed, thus driving DNA branch migration. The RuvB motors rotate together with the DNA substrate, which together with the progressing nucleotide cycle form the mechanistic basis for DNA recombination by continuous HJ branch migration. Branch migration allows RuvC to scan DNA until it finds its consensus sequence, where it cleaves and resolves cruciform DNA. The polypeptide is Holliday junction branch migration complex subunit RuvB (Proteus mirabilis (strain HI4320)).